A 304-amino-acid chain; its full sequence is Flagellin (304 aa).

Belongs to the bacterial flagellin family. As to quaternary structure, interacts with FliW in a 1:1 complex. Forms a 3-way complex of Hag, FliS and FliW, in which Flis and FliW do not directly interact.

It localises to the secreted. The protein resides in the bacterial flagellum. It is found in the cell wall. Functionally, flagellin is the subunit which polymerizes to form the filaments of bacterial flagella. Assembly into flagella requires FliW. Acts as a homeostatic autoinhibitory regulator to control its own cytoplasmic levels. Partner switching by flagellin between FliW and CsrA provides a flagellar assembly checkpoint to tightly control the timing of flagellin synthesis. Flagellin binds to assembly factor FliW, freeing translation regulator CsrA to repress translation of the flagellin mRNA. When the flagellar hook is assembled flagellin is secreted, depleting intracellular flagellin, which frees FliW to interact with CsrA. This derepresses flagellin translation and provides protein for flagellar assembly. Once the flagellar filament is completed cytoplasmic flagellin levels rise and CsrA translation repression of flagellin reinitiates. The protein is Flagellin of Bacillus subtilis (strain 168).